The following is a 347-amino-acid chain: Phospho-N-acetylmuramoyl-pentapeptide-transferase (347 aa).

10 consecutive transmembrane segments (helical) span residues 10-30 (SLVFFLLTVFALAFILGIFLG), 67-87 (AGGILFFIVLLLTIFFWLPLG), 91-111 (TWLFAFLIISWSSLGWYDDIV), 127-147 (FVLQLLISAVITTAVMYIYKG), 164-184 (LGHSVLGQVFYFILAVLAIVG), 195-215 (LDGLAAGTTCMCAFGLLVVAV), 220-240 (IPLATDIPVLLTALLGVSLAF), 250-270 (VFMGDTGSLLIGGVLGSCAVM), 275-295 (LLLILLGGVFVAEAGSVILQI), and 325-345 (VVKRFWTAGFFCMVFGIIAAL).

It belongs to the glycosyltransferase 4 family. MraY subfamily. Mg(2+) is required as a cofactor.

The protein localises to the cell inner membrane. It catalyses the reaction UDP-N-acetyl-alpha-D-muramoyl-L-alanyl-gamma-D-glutamyl-meso-2,6-diaminopimeloyl-D-alanyl-D-alanine + di-trans,octa-cis-undecaprenyl phosphate = di-trans,octa-cis-undecaprenyl diphospho-N-acetyl-alpha-D-muramoyl-L-alanyl-D-glutamyl-meso-2,6-diaminopimeloyl-D-alanyl-D-alanine + UMP. It functions in the pathway cell wall biogenesis; peptidoglycan biosynthesis. Its function is as follows. Catalyzes the initial step of the lipid cycle reactions in the biosynthesis of the cell wall peptidoglycan: transfers peptidoglycan precursor phospho-MurNAc-pentapeptide from UDP-MurNAc-pentapeptide onto the lipid carrier undecaprenyl phosphate, yielding undecaprenyl-pyrophosphoryl-MurNAc-pentapeptide, known as lipid I. In Chlamydia abortus (strain DSM 27085 / S26/3) (Chlamydophila abortus), this protein is Phospho-N-acetylmuramoyl-pentapeptide-transferase.